Reading from the N-terminus, the 271-residue chain is Probable diacyglycerol O-acyltransferase tgs3 (271 aa).

The protein belongs to the long-chain O-acyltransferase family.

It catalyses the reaction an acyl-CoA + a 1,2-diacyl-sn-glycerol = a triacyl-sn-glycerol + CoA. Its pathway is glycerolipid metabolism; triacylglycerol biosynthesis. Catalyzes the terminal and only committed step in triacylglycerol synthesis by using diacylglycerol and fatty acyl CoA as substrates. Required for storage lipid synthesis. The chain is Probable diacyglycerol O-acyltransferase tgs3 (tgs3) from Mycobacterium tuberculosis (strain CDC 1551 / Oshkosh).